Reading from the N-terminus, the 132-residue chain is uncharacterized protein (132 aa).

The tract at residues 39–93 (HPAGASEALGALPPPRQLVEKRRVSPPRRLDQSGRDGGAVAKCSLSRGLSPPGWT) is disordered. Basic and acidic residues predominate over residues 56–72 (LVEKRRVSPPRRLDQSG).

This is an uncharacterized protein from Homo sapiens (Human).